Here is a 461-residue protein sequence, read N- to C-terminus: MKKDTRKYMIYFFGALGGLLYGYDTGVISGALLFINNDIPLTTLTEGLVVSMLLLGAIFGSALSGTCSDRWGRRKVVFVLSIIFIIGALACAFSQTIGMLIASRVILGLAVGGSTALVPVYLSEMAPTKIRGTLGTMNNLMIVTGILLAYIVNYLFTPFEAWRWMVGLAAVPAVLLLIGIAFMPESPRWLVKRGSEEEARRIMNITHDPKDIEMELAEMKQGEAEKKETTLGVLKAKWIRPMLLIGVGLAIFQQAVGINTVIYYAPTIFTKAGLGTSASALGTMGIGILNVIMCITAMILIDRVGRKKLLIWGSVGITLSLAALSGVLLTLGLSASTAWMTVVFLGVYIVFYQATWGPVVWVLMPELFPSKARGAATGFTTLVLSAANLIVSLVFPLMLSAMGIAWVFMVFSVICLLSFFFAFYMVPETKGKSLEEIEASLKKRFKKKKSTQNQVLNERTL.

The Cytoplasmic portion of the chain corresponds to 1-14; sequence MKKDTRKYMIYFFG. A helical transmembrane segment spans residues 15–35; it reads ALGGLLYGYDTGVISGALLFI. Topologically, residues 36–38 are extracellular; sequence NND. The chain crosses the membrane as a helical span at residues 39-59; the sequence is IPLTTLTEGLVVSMLLLGAIF. Over 60–76 the chain is Cytoplasmic; the sequence is GSALSGTCSDRWGRRKV. A helical membrane pass occupies residues 77–97; sequence VFVLSIIFIIGALACAFSQTI. The Extracellular portion of the chain corresponds to 98-104; sequence GMLIASR. Residues 105–125 form a helical membrane-spanning segment; the sequence is VILGLAVGGSTALVPVYLSEM. Residues 126 to 139 lie on the Cytoplasmic side of the membrane; the sequence is APTKIRGTLGTMNN. Residues 140 to 160 form a helical membrane-spanning segment; the sequence is LMIVTGILLAYIVNYLFTPFE. Topologically, residues 161-163 are extracellular; it reads AWR. A helical transmembrane segment spans residues 164 to 184; sequence WMVGLAAVPAVLLLIGIAFMP. Residues 185–241 lie on the Cytoplasmic side of the membrane; sequence ESPRWLVKRGSEEEARRIMNITHDPKDIEMELAEMKQGEAEKKETTLGVLKAKWIRP. Residues 242–262 traverse the membrane as a helical segment; it reads MLLIGVGLAIFQQAVGINTVI. Over 263–280 the chain is Extracellular; that stretch reads YYAPTIFTKAGLGTSASA. The helical transmembrane segment at 281-301 threads the bilayer; sequence LGTMGIGILNVIMCITAMILI. Residues 302–308 lie on the Cytoplasmic side of the membrane; it reads DRVGRKK. A helical transmembrane segment spans residues 309–329; that stretch reads LLIWGSVGITLSLAALSGVLL. Over 330 to 341 the chain is Extracellular; sequence TLGLSASTAWMT. The helical transmembrane segment at 342–362 threads the bilayer; that stretch reads VVFLGVYIVFYQATWGPVVWV. The Cytoplasmic portion of the chain corresponds to 363-378; the sequence is LMPELFPSKARGAATG. Residues 379 to 399 form a helical membrane-spanning segment; the sequence is FTTLVLSAANLIVSLVFPLML. Over 400-402 the chain is Extracellular; the sequence is SAM. The chain crosses the membrane as a helical span at residues 403 to 423; it reads GIAWVFMVFSVICLLSFFFAF. Topologically, residues 424–461 are cytoplasmic; the sequence is YMVPETKGKSLEEIEASLKKRFKKKKSTQNQVLNERTL.

The protein belongs to the major facilitator superfamily. Sugar transporter (TC 2.A.1.1) family.

The protein localises to the cell membrane. Could serve either a nutritional or an osmotic protection function. The chain is Probable metabolite transport protein CsbC (csbC) from Bacillus subtilis (strain 168).